We begin with the raw amino-acid sequence, 84 residues long: Acyl carrier protein homolog (84 aa).

Positions 4 to 79 (RDILLKIKEI…ELIAEVKHLI (76 aa)) constitute a Carrier domain. O-(pantetheine 4'-phosphoryl)serine is present on serine 39.

4'-phosphopantetheine is transferred from CoA to a specific serine of the apo-ACP-like protein.

Its pathway is lipid metabolism; fatty acid biosynthesis. Functionally, carrier of the growing fatty acid chain in fatty acid biosynthesis. This is Acyl carrier protein homolog from Mycoplasma pneumoniae (strain ATCC 29342 / M129 / Subtype 1) (Mycoplasmoides pneumoniae).